The following is a 1364-amino-acid chain: MALFRKFFYRKPPDGLLEITERVYVFDSCFTTDVFNDDKYQDYIGDIVAQLQCHFADASFMVFNFREGESQSLLANILSSYEMVVMDYPRQYEGCPLVTIEMIHHFLRSGESWLSLSQQNVLIMHCERGGWAVLAFMLAGLLLYRKQYIGEQRTLEMIYRQAPRELIQLLSPLNPIPSQIRYLHYISRRNVSAVWPPGDRALTLDCVILRNIPGFNGEGGCRPIFRIYGKDPLLATSNTPKVLFSTPKRSKYVRLYKKVDCELIKIDIHCHIQGDVVLECISLDADQQREEMIFRVMFNTAFIRSNILMLNRDEIDILWDAKDRFPKEFRAEVLFSEMDSVNQLDSMEVGGIGEKEGLPVEAFAKVQEMFSNVDWLDPTADAAALLFQQLTSSENIQLRKGLLSPNKKDFHLSSISPTKKQSDNVEDKLSNAELSTIYVHKQENNDVQGLIPQKQATIPDEKSGSSVIHEKMISLVHEEITQVVDINTGCLSSLDMTVPSTMNSSRPVLIDQNSKLDDQFGSLQSSSPTMIMSQQFPVSRSSSVLSSDFSPRLLSACPRFHSAPSALGITALLEDHAAFGDTKNSVKVSSAVVKIPSKQSSQQHPITVTPVVTKCTPSPPPLLPPLAPVVPVPSDDQMISQEKDMSQQAQKHPDLSSFPSLSPTQQKQSTSKLCQTILPTNHQLSSSNITKEPLQISPAPTPPPLPTPSTSSSSSCHCLPPDSMLSTTTALFRPPAPPPPPLQSPSTPRCSPVRTLASPPPPPAPTSSPVRMSGPPPPPPPPAPNSCPSRPAPPPPPPPPLASTSSPPRPAAPSPCQLHTSTSSPARPVPPPPPTLSTIRSSAPTPPLLPGATSAPSPPPPPPPCSSSNQLSAPPPPPPSFSKNNGSIAPPPAPPGGNAKLPGMRGRGPAPPSGPMSRSLQSGQAASRRSNLKPLHWVKVTRAMQGSLWEESQKTDEASKPPVFDMSELEHLFSAVLPSSDGKRSDKSGSRASGSKPEKIHLIDLRRANNCGIMLTKVKMPLPDLMSAILTLDDTILDADQVENLIKFTPTKEEAELLKGYKGDKQVLGECEQFFMELMKLPRVDSKLRVFLFKIQFPSQVSDLKRSLNIVNSSAEEIRGSAKLKRIMQTILSLGNALNQGTARGSAVGFRLDSLLKLSDTRARNNKMTLMHYLSKVLSEKLPELLDFPKDLASLELAAKVQLKSLAEEMQAINKGLEKVEQELTTSENDGPVSEIFRKTLKDFLSGAEAEVRSLTSLYSNVGRNADALALYFGEDPARCPFEQVVITLQNFVRLFVRSHDENCKQLDLEKKKALKEAEAEKTKKEPENAQKTKEPGNDKAKHNNSIKELDISLQSPAQTASAK.

Residues 9-193 (YRKPPDGLLE…HYISRRNVSA (185 aa)) form the Phosphatase tensin-type domain. Catalysis depends on cysteine 126, which acts as the Phosphocysteine intermediate. Positions 199–338 (DRALTLDCVI…FRAEVLFSEM (140 aa)) constitute a C2 tensin-type domain. Disordered stretches follow at residues 614–934 (KCTP…NLKP), 976–999 (VLPS…KPEK), and 1317–1364 (EAEA…ASAK). The segment covering 617 to 631 (PSPPPLLPPLAPVVP) has biased composition (pro residues). Residues 657 to 690 (SFPSLSPTQQKQSTSKLCQTILPTNHQLSSSNIT) show a composition bias toward polar residues. Over residues 734–743 (PPAPPPPPLQ) the composition is skewed to pro residues. Residues 744 to 757 (SPSTPRCSPVRTLA) are compositionally biased toward low complexity. Composition is skewed to pro residues over residues 774-813 (GPPP…PAAP) and 856-865 (PSPPPPPPPC). Positions 916–929 (MSRSLQSGQAASRR) are enriched in polar residues. The 401-residue stretch at 922–1322 (SGQAASRRSN…KALKEAEAEK (401 aa)) folds into the FH2 domain. The segment covering 1317–1351 (EAEAEKTKKEPENAQKTKEPGNDKAKHNNSIKELD) has biased composition (basic and acidic residues). Positions 1353-1364 (SLQSPAQTASAK) are enriched in polar residues.

The protein belongs to the formin-like family. Class-II subfamily.

The polypeptide is Formin-like protein 6 (FH6) (Oryza sativa subsp. japonica (Rice)).